Here is a 553-residue protein sequence, read N- to C-terminus: Serine/threonine-protein phosphatase 2B catalytic subunit A1 (553 aa).

Ser-2 carries the N-acetylserine modification. Asp-119, His-121, and Asp-147 together coordinate Fe cation. Asp-147 and Asn-179 together coordinate Zn(2+). His-180 functions as the Proton donor in the catalytic mechanism. Positions 228 and 317 each coordinate Zn(2+). A disordered region spans residues Leu-413–Ala-447. Basic and acidic residues predominate over residues Ser-417–Lys-427.

Belongs to the PPP phosphatase family. PP-2B subfamily. In terms of assembly, composed of two components (A and B), the A component is the catalytic subunit and the B component confers calcium sensitivity. Fe(3+) is required as a cofactor. The cofactor is Zn(2+).

The enzyme catalyses O-phospho-L-seryl-[protein] + H2O = L-seryl-[protein] + phosphate. It carries out the reaction O-phospho-L-threonyl-[protein] + H2O = L-threonyl-[protein] + phosphate. Calcium-dependent, calmodulin-stimulated protein phosphatase. This subunit may have a role in the calmodulin activation of calcineurin. This is Serine/threonine-protein phosphatase 2B catalytic subunit A1 (CNA1) from Saccharomyces cerevisiae (strain ATCC 204508 / S288c) (Baker's yeast).